Reading from the N-terminus, the 362-residue chain is Chorismate synthase (362 aa).

Residue arginine 46 coordinates NADP(+). FMN contacts are provided by residues 122 to 124 (RSS), 238 to 239 (NA), glycine 278, 293 to 297 (KPTPS), and arginine 319.

The protein belongs to the chorismate synthase family. In terms of assembly, homotetramer. Requires FMNH2 as cofactor.

The catalysed reaction is 5-O-(1-carboxyvinyl)-3-phosphoshikimate = chorismate + phosphate. The protein operates within metabolic intermediate biosynthesis; chorismate biosynthesis; chorismate from D-erythrose 4-phosphate and phosphoenolpyruvate: step 7/7. Its function is as follows. Catalyzes the anti-1,4-elimination of the C-3 phosphate and the C-6 proR hydrogen from 5-enolpyruvylshikimate-3-phosphate (EPSP) to yield chorismate, which is the branch point compound that serves as the starting substrate for the three terminal pathways of aromatic amino acid biosynthesis. This reaction introduces a second double bond into the aromatic ring system. The sequence is that of Chorismate synthase from Campylobacter jejuni subsp. jejuni serotype O:2 (strain ATCC 700819 / NCTC 11168).